A 98-amino-acid polypeptide reads, in one-letter code: Small ribosomal subunit protein bS18c (98 aa).

Residues 1 to 13 (MSKQSFDFKRYKP) show a composition bias toward basic and acidic residues. Residues 1-26 (MSKQSFDFKRYKPEAPSGSRKRPLKK) are disordered.

This sequence belongs to the bacterial ribosomal protein bS18 family. As to quaternary structure, part of the 30S ribosomal subunit.

It is found in the plastid. Its subcellular location is the chloroplast. The chain is Small ribosomal subunit protein bS18c from Gnetum parvifolium (Small-leaved jointfir).